A 329-amino-acid polypeptide reads, in one-letter code: Acetyl-coenzyme A carboxylase carboxyl transferase subunit alpha (329 aa).

A CoA carboxyltransferase C-terminal domain is found at 40-294 (QLETLAARRR…REAIERHLDD (255 aa)).

It belongs to the AccA family. In terms of assembly, acetyl-CoA carboxylase is a heterohexamer composed of biotin carboxyl carrier protein (AccB), biotin carboxylase (AccC) and two subunits each of ACCase subunit alpha (AccA) and ACCase subunit beta (AccD).

The protein localises to the cytoplasm. It catalyses the reaction N(6)-carboxybiotinyl-L-lysyl-[protein] + acetyl-CoA = N(6)-biotinyl-L-lysyl-[protein] + malonyl-CoA. It participates in lipid metabolism; malonyl-CoA biosynthesis; malonyl-CoA from acetyl-CoA: step 1/1. In terms of biological role, component of the acetyl coenzyme A carboxylase (ACC) complex. First, biotin carboxylase catalyzes the carboxylation of biotin on its carrier protein (BCCP) and then the CO(2) group is transferred by the carboxyltransferase to acetyl-CoA to form malonyl-CoA. This chain is Acetyl-coenzyme A carboxylase carboxyl transferase subunit alpha, found in Prochlorococcus marinus (strain MIT 9303).